Consider the following 304-residue polypeptide: Lipoyl synthase (304 aa).

Residues cysteine 41, cysteine 46, cysteine 52, cysteine 68, cysteine 72, cysteine 75, and serine 281 each contribute to the [4Fe-4S] cluster site. Positions 54–270 constitute a Radical SAM core domain; sequence GARRTATFMI…RKIAMEKGFK (217 aa). A disordered region spans residues 282–304; sequence YHADEQVNEAAKEKQRQGEEQLN.

Belongs to the radical SAM superfamily. Lipoyl synthase family. The cofactor is [4Fe-4S] cluster.

It is found in the cytoplasm. It catalyses the reaction [[Fe-S] cluster scaffold protein carrying a second [4Fe-4S](2+) cluster] + N(6)-octanoyl-L-lysyl-[protein] + 2 oxidized [2Fe-2S]-[ferredoxin] + 2 S-adenosyl-L-methionine + 4 H(+) = [[Fe-S] cluster scaffold protein] + N(6)-[(R)-dihydrolipoyl]-L-lysyl-[protein] + 4 Fe(3+) + 2 hydrogen sulfide + 2 5'-deoxyadenosine + 2 L-methionine + 2 reduced [2Fe-2S]-[ferredoxin]. The protein operates within protein modification; protein lipoylation via endogenous pathway; protein N(6)-(lipoyl)lysine from octanoyl-[acyl-carrier-protein]. Its function is as follows. Catalyzes the radical-mediated insertion of two sulfur atoms into the C-6 and C-8 positions of the octanoyl moiety bound to the lipoyl domains of lipoate-dependent enzymes, thereby converting the octanoylated domains into lipoylated derivatives. The polypeptide is Lipoyl synthase (Staphylococcus epidermidis (strain ATCC 35984 / DSM 28319 / BCRC 17069 / CCUG 31568 / BM 3577 / RP62A)).